Here is a 621-residue protein sequence, read N- to C-terminus: Amino-acid acetyltransferase, mitochondrial (621 aa).

The transit peptide at 1–77 directs the protein to the mitochondrion; it reads MIPRAPPSTQ…RSYLASFGVQ (77 aa). The disordered stretch occupies residues 213 to 233; that stretch reads PKPGSEEESEPGFSPPETHIY. One can recognise an N-acetyltransferase domain in the interval 424-600; that stretch reads LPIRVVRSVS…GSAGLSFIED (177 aa).

This sequence belongs to the acetyltransferase family.

Its subcellular location is the mitochondrion. The catalysed reaction is L-glutamate + acetyl-CoA = N-acetyl-L-glutamate + CoA + H(+). It participates in amino-acid biosynthesis; L-arginine biosynthesis; N(2)-acetyl-L-ornithine from L-glutamate: step 1/4. Its function is as follows. N-acetylglutamate synthase involved in arginine biosynthesis. The chain is Amino-acid acetyltransferase, mitochondrial (ARG2) from Coprinopsis cinerea (strain Okayama-7 / 130 / ATCC MYA-4618 / FGSC 9003) (Inky cap fungus).